The primary structure comprises 209 residues: Large ribosomal subunit protein uL3 (209 aa).

Gln-150 is modified (N5-methylglutamine).

Belongs to the universal ribosomal protein uL3 family. Part of the 50S ribosomal subunit. Forms a cluster with proteins L14 and L19. Post-translationally, methylated by PrmB.

In terms of biological role, one of the primary rRNA binding proteins, it binds directly near the 3'-end of the 23S rRNA, where it nucleates assembly of the 50S subunit. This is Large ribosomal subunit protein uL3 from Vibrio cholerae serotype O1 (strain ATCC 39541 / Classical Ogawa 395 / O395).